Consider the following 280-residue polypeptide: DegV domain-containing protein M6_Spy1440 (280 aa).

The region spanning 3–280 (WKIVTDSGCD…DGGLLMGYEI (278 aa)) is the DegV domain. Hexadecanoate-binding residues include serine 63 and serine 91.

Functionally, may bind long-chain fatty acids, such as palmitate, and may play a role in lipid transport or fatty acid metabolism. This Streptococcus pyogenes serotype M6 (strain ATCC BAA-946 / MGAS10394) protein is DegV domain-containing protein M6_Spy1440.